A 415-amino-acid polypeptide reads, in one-letter code: D-galactonate dehydratase family member RspA (415 aa).

Substrate is bound by residues Asn-48 and His-133. The active-site Proton donor/acceptor is the Tyr-170. Asp-223 contacts Mg(2+). The active-site Proton donor/acceptor is His-225. 3 residues coordinate Mg(2+): Glu-249, Asp-250, and Glu-275. Residues Glu-275, Arg-296, His-325, Asp-329, and Glu-352 each contribute to the substrate site.

It belongs to the mandelate racemase/muconate lactonizing enzyme family. GalD subfamily. Mg(2+) is required as a cofactor.

It carries out the reaction D-mannonate = 2-dehydro-3-deoxy-D-gluconate + H2O. In terms of biological role, has low D-mannonate dehydratase activity (in vitro), suggesting that this is not a physiological substrate and that it has no significant role in D-mannonate degradation in vivo. Has no detectable activity with a panel of 70 other acid sugars (in vitro). In Escherichia coli O6:H1 (strain CFT073 / ATCC 700928 / UPEC), this protein is D-galactonate dehydratase family member RspA (rspA).